We begin with the raw amino-acid sequence, 255 residues long: Undecaprenyl-diphosphatase (255 aa).

The next 6 helical transmembrane spans lie at 1 to 21 (MDIIQVIVLSIIEGITEFLPI), 75 to 95 (IIISFIPVGIMGLLFHKIVYQ), 96 to 116 (LFTVQIVATAFIVGGIIFLIV), 174 to 194 (TEFSFLGALPVMLAASLFDIV), 203 to 223 (GDISNLVVGFIVSFFMALITI), and 234 to 254 (NFVPFGIYRILFGVILLMFFV).

Belongs to the UppP family.

The protein localises to the cell membrane. The catalysed reaction is di-trans,octa-cis-undecaprenyl diphosphate + H2O = di-trans,octa-cis-undecaprenyl phosphate + phosphate + H(+). Its function is as follows. Catalyzes the dephosphorylation of undecaprenyl diphosphate (UPP). The polypeptide is Undecaprenyl-diphosphatase (Methanococcus aeolicus (strain ATCC BAA-1280 / DSM 17508 / OCM 812 / Nankai-3)).